The following is a 127-amino-acid chain: Large ribosomal subunit protein bL19 (127 aa).

It belongs to the bacterial ribosomal protein bL19 family.

This protein is located at the 30S-50S ribosomal subunit interface and may play a role in the structure and function of the aminoacyl-tRNA binding site. In Jannaschia sp. (strain CCS1), this protein is Large ribosomal subunit protein bL19.